We begin with the raw amino-acid sequence, 994 residues long: MATFKRDLTKNVGVEDLIMLTEVSESSLHENLKIRYKEGLIYTSIGPVLVSMNPYKQLGIYGNDQINLYKGKHEFEIPPHIYSIADKAYRALRSEGENQCIIISGESGAGKTEASKYIMQYIASITGSSTEVERVKKTILESNPLLEAFGNAKTLRNNNSSRFGKYMEIQFNLGGDPEGGKITNYLLEKSRVINQTQGERNFHIFYQLLKGSSEEEKKTYNLLSPDQYHYLTRNASNGCFTADGIDDQIGFKQTKNAMKVVGIDEPLQKEIFATLSAILLLGNLSFNKSASGNGSVISDKKLANTIASLMGVDAIVLESSLVSRQISTGQGARISTYSVPQTVEQAMYARDAFAKATYSKLFDFIVRKINQSIEVKTIGKVIGVLDIYGFEIFENNSFEQFCINYVNETLQQIFIDLTLKTEQEEYVQEGITWIPVQYINNKACVDLIEKKPIGILSLLDEECLFPEGNDQTMIDKLNKHFSNHTHYSKVERQKNSQFIINHYAGKVFYNIDGFLDKNRDTLFNDLVTLATSSSCSLLVEIFKYVPPLEVDPEQEKKNRDKFSKNGFANNAAKTFIPTDKKRPITAGFQFKNQVTSLLKSLYSCSPHYVRCIKPNSNMRALEWDQSKCAEQVAYLGLFENLLVRRAGYCYRQTFSKFMRRYYMIGKSTWPKWSGDAEKGVNLLMGELTQEINIKEEVQYGKTKIFIRNPQPLFLLEDKRNKRLNDLATKIGSVWKMYKQRKWYLRTLAAIKIQRTYRGWLLVRECVKLKNQSISIFQNNKERNRQSIKLSKAAFIGDFLSLTRDNYTTATLKREEGPNAVLQLSLNVSKVSRHHKIQKRSLLVTNETIFTITPHKPKKDGSWFAIKRKVPFSAIEKISFSKLSDDFFVIHIINEHDLCLETNKKTVLITLLSNLYSKHLNGKELVFEFKDSIQYRNQKGPSELKFVKVDSIHEKSSNSPQANSPSFTAKAEKNYLKVCVLPGLSSESKSILIEK.

The Myosin motor domain maps to 12–720 (VGVEDLIMLT…PLFLLEDKRN (709 aa)). 105-112 (GESGAGKT) serves as a coordination point for ATP. The interval 574-654 (TFIPTDKKRP…RAGYCYRQTF (81 aa)) is actin-binding. IQ domains are found at residues 723–744 (LNDL…KWYL) and 745–774 (RTLA…QSIS). The TH1 domain maps to 782 to 970 (RNRQSIKLSK…ANSPSFTAKA (189 aa)).

It belongs to the TRAFAC class myosin-kinesin ATPase superfamily. Myosin family. As to quaternary structure, myosin I heavy chain is single-headed. Dimer of a heavy and a light chain. Inability to self-assemble into filaments.

Its function is as follows. Actin-based motor protein, possibly involved in a wide range of motile processes, such as cell movement across a surface, and extension and retraction of pseudopodia or lamellipodia. The polypeptide is Myosin IA heavy chain (myoA) (Dictyostelium discoideum (Social amoeba)).